Consider the following 355-residue polypeptide: DNA-directed RNA polymerase subunit alpha (355 aa).

Residues 1 to 233 (MVREKVRVST…DLFIPFLHKE (233 aa)) form an alpha N-terminal domain (alpha-NTD) region. The alpha C-terminal domain (alpha-CTD) stretch occupies residues 268 to 355 (KKKIALKSIF…EIYCYSIFFH (88 aa)).

Belongs to the RNA polymerase alpha chain family. In terms of assembly, in plastids the minimal PEP RNA polymerase catalytic core is composed of four subunits: alpha, beta, beta', and beta''. When a (nuclear-encoded) sigma factor is associated with the core the holoenzyme is formed, which can initiate transcription.

The protein localises to the plastid. It is found in the chloroplast. The catalysed reaction is RNA(n) + a ribonucleoside 5'-triphosphate = RNA(n+1) + diphosphate. Its function is as follows. DNA-dependent RNA polymerase catalyzes the transcription of DNA into RNA using the four ribonucleoside triphosphates as substrates. The sequence is that of DNA-directed RNA polymerase subunit alpha from Jasminum nudiflorum (Winter jasmine).